We begin with the raw amino-acid sequence, 257 residues long: Imidazole glycerol phosphate synthase subunit HisF (257 aa).

Active-site residues include Asp11 and Asp130.

Belongs to the HisA/HisF family. As to quaternary structure, heterodimer of HisH and HisF.

It is found in the cytoplasm. It catalyses the reaction 5-[(5-phospho-1-deoxy-D-ribulos-1-ylimino)methylamino]-1-(5-phospho-beta-D-ribosyl)imidazole-4-carboxamide + L-glutamine = D-erythro-1-(imidazol-4-yl)glycerol 3-phosphate + 5-amino-1-(5-phospho-beta-D-ribosyl)imidazole-4-carboxamide + L-glutamate + H(+). It functions in the pathway amino-acid biosynthesis; L-histidine biosynthesis; L-histidine from 5-phospho-alpha-D-ribose 1-diphosphate: step 5/9. Functionally, IGPS catalyzes the conversion of PRFAR and glutamine to IGP, AICAR and glutamate. The HisF subunit catalyzes the cyclization activity that produces IGP and AICAR from PRFAR using the ammonia provided by the HisH subunit. The sequence is that of Imidazole glycerol phosphate synthase subunit HisF from Shewanella loihica (strain ATCC BAA-1088 / PV-4).